Consider the following 89-residue polypeptide: Small ribosomal subunit protein uS15 (89 aa).

The protein belongs to the universal ribosomal protein uS15 family. In terms of assembly, part of the 30S ribosomal subunit. Forms a bridge to the 50S subunit in the 70S ribosome, contacting the 23S rRNA.

Functionally, one of the primary rRNA binding proteins, it binds directly to 16S rRNA where it helps nucleate assembly of the platform of the 30S subunit by binding and bridging several RNA helices of the 16S rRNA. Its function is as follows. Forms an intersubunit bridge (bridge B4) with the 23S rRNA of the 50S subunit in the ribosome. The sequence is that of Small ribosomal subunit protein uS15 from Chlamydia pneumoniae (Chlamydophila pneumoniae).